The sequence spans 185 residues: Ribosomal RNA small subunit methyltransferase G (185 aa).

S-adenosyl-L-methionine is bound by residues Gly-59, Phe-64, 110–111 (IQ), and Arg-127.

This sequence belongs to the methyltransferase superfamily. RNA methyltransferase RsmG family.

It localises to the cytoplasm. The catalysed reaction is guanosine(527) in 16S rRNA + S-adenosyl-L-methionine = N(7)-methylguanosine(527) in 16S rRNA + S-adenosyl-L-homocysteine. In terms of biological role, specifically methylates the N7 position of guanine in position 527 of 16S rRNA. The sequence is that of Ribosomal RNA small subunit methyltransferase G from Helicobacter hepaticus (strain ATCC 51449 / 3B1).